The chain runs to 880 residues: EP-cadherin (880 aa).

The signal sequence occupies residues 1–28; sequence MGSTRLRNASVWLCGLLCLLQVVPSINA. Positions 29–155 are excised as a propeptide; that stretch reads DVSGCKPGFS…THTGLKRKKR (127 aa). The N-linked (GlcNAc...) asparagine glycan is linked to N61. 5 consecutive Cadherin domains span residues 156–263, 264–376, 377–487, 488–593, and 594–704; these read DWVI…RPKF, TQDV…APIF, DPKT…APFF, VPAV…DNGP, and VPSP…GFDL. Topologically, residues 156-703 are extracellular; that stretch reads DWVIPPIKVS…CQEKLVGGFD (548 aa). O-linked (GalNAc...) threonine glycans are attached at residues T343, T382, and T400. N425 is a glycosylation site (N-linked (GlcNAc...) asparagine). Residues T428, T469, T471, T473, and T475 are each glycosylated (O-linked (GalNAc...) threonine). N-linked (GlcNAc...) asparagine glycosylation is present at N558. Residues T562, T576, T578, and T580 are each glycosylated (O-linked (GalNAc...) threonine). Disulfide bonds link C603-C687 and C685-C694. Residue N681 is glycosylated (N-linked (GlcNAc...) asparagine). A helical transmembrane segment spans residues 704–728; sequence LPIILVILGSVLALLILFLLLLLFL. Over 729 to 880 the chain is Cytoplasmic; sequence KRKKVVKEPL…DMYGGDDDEE (152 aa). Residues 790-826 form a disordered region; the sequence is PAPHYRPRPSNPDEIGNFIDENLDAADNDPTAPPYDS.

Interacts with CTNNB1.

It localises to the cell membrane. Cadherins are calcium-dependent cell adhesion proteins. They preferentially interact with themselves in a homophilic manner in connecting cells; cadherins may thus contribute to the sorting of heterogeneous cell types. The protein is EP-cadherin of Xenopus laevis (African clawed frog).